A 250-amino-acid polypeptide reads, in one-letter code: 26S proteasome non-ATPase regulatory subunit 8 (250 aa).

A PCI domain is found at 63–233 (HDFETFDDYI…QEKPVNLDTV (171 aa)).

Belongs to the proteasome subunit S14 family.

Acts as a regulatory subunit of the 26S proteasome which is involved in the ATP-dependent degradation of ubiquitinated proteins. The protein is 26S proteasome non-ATPase regulatory subunit 8 of Caenorhabditis elegans.